A 104-amino-acid chain; its full sequence is Pole-localizer protein TmaR (104 aa).

2 coiled-coil regions span residues 13 to 43 and 76 to 96; these read RKNK…NLLD and SAEI…LTEE.

It belongs to the pole-localizer TmaR family.

The protein resides in the cytoplasm. In terms of biological role, pole-localizer protein involved in the regulation of several cellular processes. The chain is Pole-localizer protein TmaR from Vibrio vulnificus (strain CMCP6).